The sequence spans 595 residues: Zinc finger protein 467 (595 aa).

Positions 1 to 67 (MRETLEALSS…EEGAHTEQAE (67 aa)) are disordered. Residue Lys-97 forms a Glycyl lysine isopeptide (Lys-Gly) (interchain with G-Cter in SUMO2) linkage. 6 consecutive C2H2-type zinc fingers follow at residues 160–182 (YGCG…QRLH), 188–210 (CACP…QRSH), 216–238 (FPCS…LRTH), 244–266 (YPCA…QKTH), 272–294 (FPCT…QRIH), and 300–322 (YQCA…QRVH). Residues 313 to 350 (QHLVRHQRVHQTAGPARPSPDSSASPHSTAPSPTPSFP) are disordered. Positions 325-343 (AGPARPSPDSSASPHSTAP) are enriched in low complexity. C2H2-type zinc fingers lie at residues 355–377 (FACS…QCLH), 431–453 (FFCP…PRVH), 459–481 (FACT…SRAH), 487–509 (FACA…QAVH), 515–537 (HACA…QAIH), and 543–565 (FSCP…QLIH). Residue Lys-368 forms a Glycyl lysine isopeptide (Lys-Gly) (interchain with G-Cter in SUMO2) linkage.

The protein belongs to the krueppel C2H2-type zinc-finger protein family. In terms of assembly, interacts with STAT3. Enhances STAT3 activity by keeping it in the nucleus.

It is found in the nucleus. Functionally, transcription factor that promotes adipocyte differentiation and suppresses osteoblast differentiation in the bone marrow. Enhances the osteoclast-supporting ability of stromal cells. Binds with STAT3 the consensus sequence 5'-CTTCTGGGAAGA-3' of the acute phase response element (APRE). Transactivates several promoters including FOS, OSM and PPARG. Recruits a histone deacetylase complex. In Homo sapiens (Human), this protein is Zinc finger protein 467 (ZNF467).